The chain runs to 438 residues: Chromosomal replication initiator protein DnaA (438 aa).

Residues 1–71 form a domain I, interacts with DnaA modulators region; sequence MTTKEFLTII…CFEIYDGSKP (71 aa). The tract at residues 71–100 is domain II; it reads PTIEIKLSNEKKSKKEILKEQTQNESTEST. The segment at 101-315 is domain III, AAA+ region; sequence ILNPSYTFDS…GVLIRINASA (215 aa). Residues G145, G147, K148, and T149 each coordinate ATP. The interval 316-438 is domain IV, binds dsDNA; that stretch reads SLLNQEITLP…LKNKIINSRE (123 aa).

Belongs to the DnaA family. Oligomerizes as a right-handed, spiral filament on DNA at oriC.

The protein localises to the cytoplasm. Plays an essential role in the initiation and regulation of chromosomal replication. ATP-DnaA binds to the origin of replication (oriC) to initiate formation of the DNA replication initiation complex once per cell cycle. Binds the DnaA box (a 9 base pair repeat at the origin) and separates the double-stranded (ds)DNA. Forms a right-handed helical filament on oriC DNA; dsDNA binds to the exterior of the filament while single-stranded (ss)DNA is stabiized in the filament's interior. The ATP-DnaA-oriC complex binds and stabilizes one strand of the AT-rich DNA unwinding element (DUE), permitting loading of DNA polymerase. After initiation quickly degrades to an ADP-DnaA complex that is not apt for DNA replication. Binds acidic phospholipids. This Aliarcobacter butzleri (strain RM4018) (Arcobacter butzleri) protein is Chromosomal replication initiator protein DnaA.